A 195-amino-acid polypeptide reads, in one-letter code: MAKEGLGLEITELRLGLPDAEHQVSVVNKKNEKKRAFSEIDDGVGDENSSSGGGDRKMETNKSQVVGWPPVCSYRKKNSMNEGASKMYVKVSMDGAPFLRKIDLGLHKGYSDLALALDKLFGCYGMVEALKNADNSEHVPIYEDKDGDWMLVGDVPWEMFMESCKRLRIMKKSDAKGFGLQPKGSLKGFIESAAK.

Positions 13–17 (LRLGL) match the EAR-like (transcriptional repression) motif. The tract at residues 37-60 (FSEIDDGVGDENSSSGGGDRKMET) is disordered. Positions 86-174 (KMYVKVSMDG…KRLRIMKKSD (89 aa)) constitute a PB1 domain.

Belongs to the Aux/IAA family. As to quaternary structure, homodimers and heterodimers.

The protein resides in the nucleus. Aux/IAA proteins are short-lived transcriptional factors that function as repressors of early auxin response genes at low auxin concentrations. Repression is thought to result from the interaction with auxin response factors (ARFs), proteins that bind to the auxin-responsive promoter element (AuxRE). Formation of heterodimers with ARF proteins may alter their ability to modulate early auxin response genes expression. This chain is Auxin-induced protein AUX22 (AUX22), found in Glycine max (Soybean).